The primary structure comprises 282 residues: (4-alkanoyl-5-oxo-2,5-dihydrofuran-3-yl)methyl phosphate reductase (282 aa).

6-11 serves as a coordination point for NADP(+); it reads GATGAV.

It belongs to the NmrA-type oxidoreductase family.

The catalysed reaction is a [(3S,4R)-4-alkanoyl-5-oxooxolan-3-yl]methyl phosphate + NADP(+) = a (4-alkanoyl-5-oxo-2,5-dihydrofuran-3-yl)methyl phosphate + NADPH + H(+). It catalyses the reaction [(3S,4R)-4-(6-methylheptanoyl)-5-oxooxolan-3-yl]methyl phosphate + NADP(+) = [4-(6-methylheptanoyl)-5-oxo-2H-furan-3-yl]methyl phosphate + NADPH + H(+). Its function is as follows. Involved in the biosynthesis of A factor (2-isocapryloyl-3R-hydroxymethyl-gamma-butyrolactone), a gamma-butyrolactone autoregulator that triggers secondary metabolism and morphogenesis in Streptomyces. Catalyzes the reduction of the butenolide phosphate produced by nonenzymatic intramolecular condensation of the 8-methyl-3-oxononanoyl-DHAP ester. The sequence is that of (4-alkanoyl-5-oxo-2,5-dihydrofuran-3-yl)methyl phosphate reductase from Streptomyces griseus subsp. griseus (strain JCM 4626 / CBS 651.72 / NBRC 13350 / KCC S-0626 / ISP 5235).